The chain runs to 121 residues: Large ribosomal subunit protein P2 (121 aa).

A compositionally biased stretch (low complexity) spans 72–99; it reads VAVPSGGAPAAATAAAEAPKGGDKAAAP. Residues 72-121 are disordered; that stretch reads VAVPSGGAPAAATAAAEAPKGGDKAAAPPKEEKKEESEESDADMGFSPFD.

Belongs to the eukaryotic ribosomal protein P1/P2 family. P1 and P2 exist as dimers at the large ribosomal subunit. In terms of processing, phosphorylated.

Its function is as follows. Plays an important role in the elongation step of protein synthesis. The sequence is that of Large ribosomal subunit protein P2 from Taenia solium (Pork tapeworm).